A 268-amino-acid polypeptide reads, in one-letter code: 1D-myo-inositol 2-acetamido-2-deoxy-alpha-D-glucopyranoside deacetylase (268 aa).

Residues His-7, Asp-10, and His-142 each coordinate Zn(2+).

The protein belongs to the MshB deacetylase family. Requires Zn(2+) as cofactor.

The enzyme catalyses 1D-myo-inositol 2-acetamido-2-deoxy-alpha-D-glucopyranoside + H2O = 1D-myo-inositol 2-amino-2-deoxy-alpha-D-glucopyranoside + acetate. Functionally, catalyzes the deacetylation of 1D-myo-inositol 2-acetamido-2-deoxy-alpha-D-glucopyranoside (GlcNAc-Ins) in the mycothiol biosynthesis pathway. This is 1D-myo-inositol 2-acetamido-2-deoxy-alpha-D-glucopyranoside deacetylase from Saccharomonospora viridis (strain ATCC 15386 / DSM 43017 / JCM 3036 / CCUG 5913 / NBRC 12207 / NCIMB 9602 / P101) (Thermoactinomyces viridis).